Consider the following 307-residue polypeptide: Glutathione synthetase (307 aa).

The 185-residue stretch at 120–304 folds into the ATP-grasp domain; that stretch reads KLGALRFSRW…LADQTIERLR (185 aa). Position 146 to 202 (146 to 202) interacts with ATP; sequence AREQGDVVLKPLGGRAGLGVIRVQAEAPGLKALLELVTEQERLPVMAQRFLPDVTEG. Glu-275 and Asn-277 together coordinate Mg(2+).

This sequence belongs to the prokaryotic GSH synthase family. Requires Mg(2+) as cofactor. It depends on Mn(2+) as a cofactor.

It carries out the reaction gamma-L-glutamyl-L-cysteine + glycine + ATP = glutathione + ADP + phosphate + H(+). Its pathway is sulfur metabolism; glutathione biosynthesis; glutathione from L-cysteine and L-glutamate: step 2/2. In Parasynechococcus marenigrum (strain WH8102), this protein is Glutathione synthetase.